A 414-amino-acid polypeptide reads, in one-letter code: GLABROUS1 enhancer-binding protein-like 3 (414 aa).

2 disordered regions span residues 36 to 57 and 167 to 191; these read QLRTTTTRTTTTRTTPLSLSSS and QAKDVPSGEPETNDVPCEEQDDRDV. Residues 38 to 50 show a composition bias toward low complexity; that stretch reads RTTTTRTTTTRTT. Residues 382-403 are non-canonical leucine-zipper; that stretch reads LINEWKALFVDEQRLCVKKLTF.

This sequence belongs to the GeBP family. Homo- and heterodimers. Interacts with GEBP, GPL1 and GPL2. Interacts with GEBP. In terms of tissue distribution, expressed in the apical meristem and young leaf primordia. Detected in the vascular tissues of rosette leaves, in primary and secondary roots and at the base of flowers and siliques.

It localises to the nucleus. Functionally, probable transcription factor. Involved in stress responses. Plays a repressive role in cell expansion by counteracting the positive role of CPR5 in this process, but does not regulate cell proliferation or endoreduplication. The chain is GLABROUS1 enhancer-binding protein-like 3 from Arabidopsis thaliana (Mouse-ear cress).